The primary structure comprises 110 residues: Transmembrane protein 233 (110 aa).

Positions 1 to 32 (MSQYASRSDSKGALDSSSPEAYTEDDKTEEDI) are disordered. Residues 1–42 (MSQYASRSDSKGALDSSSPEAYTEDDKTEEDIPAPSNYLWLT) lie on the Cytoplasmic side of the membrane. Residues 22–32 (YTEDDKTEEDI) show a composition bias toward acidic residues. An intramembrane region (helical) is located at residues 43 to 63 (IISCFCPAYPVNIVALVFSIM). The Cytoplasmic segment spans residues 64 to 85 (SLNSYNDGDYEGARRLGRNAKW). A helical transmembrane segment spans residues 86 to 106 (VAIASIIIGLVIIGVSCAVHF). Over 107–110 (SRNP) the chain is Extracellular.

This sequence belongs to the CD225/Dispanin family. Interacts with the giant stinging tree toxin ExTxA (P0DQP3). Interacts with Nav1.7/SCN9A. Interacts with Nav1.1/SCN1A, Nav1.2/SCN2A, Nav1.3/SCN3A, Nav1.4/SCN4A, Nav1.5/SCN5A, and Nav1.6/SCN8A. In terms of tissue distribution, probably expressed in nociceptive neurons. Detected in dorsal root ganglion neurons.

The protein localises to the membrane. Its function is as follows. Probable accessory protein of voltage-gated sodium channels. The protein is Transmembrane protein 233 of Mus musculus (Mouse).